The primary structure comprises 442 residues: Testican-1 (442 aa).

Positions 1–21 (MPAIAVLAAAAAAWCFLQVDS) are cleaved as a signal peptide. Disulfide bonds link Cys-89/Cys-100, Cys-94/Cys-110, Cys-139/Cys-169, Cys-142/Cys-162, Cys-151/Cys-183, Cys-316/Cys-340, Cys-351/Cys-358, and Cys-360/Cys-379. Residues 133–185 (PSNLVKCKPCPVAQSAMVCGSDGHTYTSKCKLEFHACSTGKSLNSLCDGPCPC) form the Kazal-like domain. Residues 313–379 (GLPCQNEMNR…GSRKQGTVSC (67 aa)) form the Thyroglobulin type-1 domain. Disordered regions lie at residues 375–395 (GTVSCEEEQETSGDFGSGGSV) and 420–442 (TRAVREDDEDEDDDKEDEVGYIW). 2 O-linked (Xyl...) (glycosaminoglycan) serine glycosylation sites follow: Ser-386 and Ser-391. The span at 425-442 (EDDEDEDDDKEDEVGYIW) shows a compositional bias: acidic residues.

Contains chondroitin sulfate and heparan sulfate O-linked oligosaccharides. Predominantly expressed in the postsynaptic area of pyramidal neurons.

The protein resides in the secreted. The protein localises to the extracellular space. It is found in the extracellular matrix. Its function is as follows. May play a role in cell-cell and cell-matrix interactions. May contribute to various neuronal mechanisms in the central nervous system. The sequence is that of Testican-1 (Spock1) from Mus musculus (Mouse).